The sequence spans 229 residues: Isopentenyl-diphosphate delta-isomerase (229 aa).

Position 39 (Lys-39) interacts with substrate. Mg(2+) contacts are provided by His-43 and His-54. The region spanning Leu-52 to Leu-202 is the Nudix hydrolase domain. The substrate site is built by Gln-72 and Lys-77. Residue Cys-89 is part of the active site. Ser-90 is a substrate binding site. 2 residues coordinate Mg(2+): Glu-152 and Glu-154. The active site involves Glu-154.

This sequence belongs to the IPP isomerase type 1 family. Mg(2+) serves as cofactor.

The protein resides in the cytoplasm. The protein localises to the nucleus. The catalysed reaction is isopentenyl diphosphate = dimethylallyl diphosphate. It participates in isoprenoid biosynthesis; dimethylallyl diphosphate biosynthesis; dimethylallyl diphosphate from isopentenyl diphosphate: step 1/1. Its function is as follows. Isopentenyl-diphosphate delta-isomerase; part of the second module of ergosterol biosynthesis pathway that includes the middle steps of the pathway. Idi1 catalyzes the 1,3-allylic rearrangement of isopentenyl (IPP) to its highly electrophilic allylic isomer, dimethylallyl diphosphate (DMAPP). The second module is carried out in the vacuole and involves the formation of farnesyl diphosphate, which is also an important intermediate in the biosynthesis of ubiquinone, dolichol, heme and prenylated proteins. Activity by the mevalonate kinase erg12 first converts mevalonate into 5-phosphomevalonate. 5-phosphomevalonate is then further converted to 5-diphosphomevalonate by the phosphomevalonate kinase erg8. The diphosphomevalonate decarboxylase mvd1 then produces isopentenyl diphosphate. The isopentenyl-diphosphate delta-isomerase idi1 then catalyzes the 1,3-allylic rearrangement of the homoallylic substrate isopentenyl (IPP) to its highly electrophilic allylic isomer, dimethylallyl diphosphate (DMAPP). Finally the farnesyl diphosphate synthase fps1 catalyzes the sequential condensation of isopentenyl pyrophosphate with dimethylallyl pyrophosphate, and then with the resultant geranylpyrophosphate to the ultimate product farnesyl pyrophosphate. The chain is Isopentenyl-diphosphate delta-isomerase from Schizosaccharomyces pombe (strain 972 / ATCC 24843) (Fission yeast).